The sequence spans 224 residues: Response regulator protein GraR (224 aa).

One can recognise a Response regulatory domain in the interval 2–115; that stretch reads QILLVEDDNT…VLIAKLQAIY (114 aa). Residue Asp51 is modified to 4-aspartylphosphate. The ompR/PhoB-type DNA-binding region spans 126–224; that stretch reads KRTLSWQDAT…KVGKGYLAHE (99 aa).

Post-translationally, phosphorylated by GraS.

It localises to the cytoplasm. Functionally, member of the two-component regulatory system GraR/GraS involved in resistance against cationic antimicrobial peptides (CAMPs). The chain is Response regulator protein GraR (graR) from Staphylococcus epidermidis (strain ATCC 35984 / DSM 28319 / BCRC 17069 / CCUG 31568 / BM 3577 / RP62A).